The primary structure comprises 30 residues: XXVPYPRPFPRPPIGPRPLPFPGGGRPFQS.

Pro residues predominate over residues 1 to 21 (XXVPYPRPFPRPPIGPRPLPF). The interval 1–30 (XXVPYPRPFPRPPIGPRPLPFPGGGRPFQS) is disordered.

This sequence to bovine bactenecin 7.

Strong antimicrobial activity against P.immobilis and M.luteus, less active against E.coli D22. This chain is Antibacterial 6.5 kDa protein, found in Carcinus maenas (Common shore crab).